A 122-amino-acid polypeptide reads, in one-letter code: Protein SPIRAL1-like 3 (122 aa).

2 disordered regions span residues 1–78 and 96–122; these read MGKA…NNYF and KVHA…SGNK. Residues 32–61 show a composition bias toward low complexity; that stretch reads TMGTTTTTTTTTTTDGTGGRPITTTTTTVT. Serine 73 bears the Phosphoserine mark.

Belongs to the SPIRAL1 family. In terms of tissue distribution, ubiquitous. Preferentially expressed in above-ground organs.

Its function is as follows. Acts redundantly with SPR1 in maintaining the cortical microtubules organization essential for anisotropic cell growth. This chain is Protein SPIRAL1-like 3 (SP1L3), found in Arabidopsis thaliana (Mouse-ear cress).